Reading from the N-terminus, the 92-residue chain is uncharacterized protein (92 aa).

This is an uncharacterized protein from Pseudoalteromonas phage PM2 (Bacteriophage PM2).